We begin with the raw amino-acid sequence, 53 residues long: uncharacterized protein (53 aa).

A helical transmembrane segment spans residues 18–38 (FLFFIFYFLFFFIFFTVFGNL).

Its subcellular location is the membrane. This is an uncharacterized protein from Dictyostelium discoideum (Social amoeba).